Reading from the N-terminus, the 438-residue chain is Thymidine phosphorylase (438 aa).

This sequence belongs to the thymidine/pyrimidine-nucleoside phosphorylase family. In terms of assembly, homodimer.

It carries out the reaction thymidine + phosphate = 2-deoxy-alpha-D-ribose 1-phosphate + thymine. Its pathway is pyrimidine metabolism; dTMP biosynthesis via salvage pathway; dTMP from thymine: step 1/2. In terms of biological role, the enzymes which catalyze the reversible phosphorolysis of pyrimidine nucleosides are involved in the degradation of these compounds and in their utilization as carbon and energy sources, or in the rescue of pyrimidine bases for nucleotide synthesis. The chain is Thymidine phosphorylase from Sinorhizobium medicae (strain WSM419) (Ensifer medicae).